The following is a 410-amino-acid chain: Arginine deiminase (410 aa).

The active-site Amidino-cysteine intermediate is Cys400.

Belongs to the arginine deiminase family.

The protein resides in the cytoplasm. The catalysed reaction is L-arginine + H2O = L-citrulline + NH4(+). It functions in the pathway amino-acid degradation; L-arginine degradation via ADI pathway; carbamoyl phosphate from L-arginine: step 1/2. The chain is Arginine deiminase from Streptococcus agalactiae serotype III (strain NEM316).